We begin with the raw amino-acid sequence, 330 residues long: DNA-directed RNA polymerase subunit alpha (330 aa).

The alpha N-terminal domain (alpha-NTD) stretch occupies residues 1-231 (MQTNLLKPKA…EQLAVFAQLE (231 aa)). Residues 250 to 330 (FDPILLRPVD…NWPPAGLDKR (81 aa)) are alpha C-terminal domain (alpha-CTD).

It belongs to the RNA polymerase alpha chain family. In terms of assembly, homodimer. The RNAP catalytic core consists of 2 alpha, 1 beta, 1 beta' and 1 omega subunit. When a sigma factor is associated with the core the holoenzyme is formed, which can initiate transcription.

The catalysed reaction is RNA(n) + a ribonucleoside 5'-triphosphate = RNA(n+1) + diphosphate. In terms of biological role, DNA-dependent RNA polymerase catalyzes the transcription of DNA into RNA using the four ribonucleoside triphosphates as substrates. The sequence is that of DNA-directed RNA polymerase subunit alpha from Acidovorax ebreus (strain TPSY) (Diaphorobacter sp. (strain TPSY)).